A 445-amino-acid chain; its full sequence is 3-phosphoshikimate 1-carboxyvinyltransferase (445 aa).

Lysine 28, serine 29, and arginine 33 together coordinate 3-phosphoshikimate. Phosphoenolpyruvate is bound at residue lysine 28. Residues glycine 101 and arginine 129 each contribute to the phosphoenolpyruvate site. The 3-phosphoshikimate site is built by serine 175, glutamine 177, aspartate 328, and lysine 355. Position 177 (glutamine 177) interacts with phosphoenolpyruvate. Aspartate 328 (proton acceptor) is an active-site residue. The phosphoenolpyruvate site is built by arginine 359 and arginine 402.

This sequence belongs to the EPSP synthase family. As to quaternary structure, monomer.

It localises to the cytoplasm. The catalysed reaction is 3-phosphoshikimate + phosphoenolpyruvate = 5-O-(1-carboxyvinyl)-3-phosphoshikimate + phosphate. Its pathway is metabolic intermediate biosynthesis; chorismate biosynthesis; chorismate from D-erythrose 4-phosphate and phosphoenolpyruvate: step 6/7. Its function is as follows. Catalyzes the transfer of the enolpyruvyl moiety of phosphoenolpyruvate (PEP) to the 5-hydroxyl of shikimate-3-phosphate (S3P) to produce enolpyruvyl shikimate-3-phosphate and inorganic phosphate. The sequence is that of 3-phosphoshikimate 1-carboxyvinyltransferase from Rhodopseudomonas palustris (strain HaA2).